The primary structure comprises 521 residues: Biotinidase (521 aa).

The first 25 residues, 1 to 25 (MSGARTAHALVFLLGCSALALGVCS), serve as a signal peptide directing secretion. The 280-residue stretch at 50–329 (NPLELSSRQQ…QGLVGTENTT (280 aa)) folds into the CN hydrolase domain. The Proton acceptor role is filled by Glu-90. N-linked (GlcNAc...) asparagine glycosylation is found at Asn-128 and Asn-181. Residue Lys-190 is the Proton donor of the active site. The Nucleophile role is filled by Cys-223. Residue Asn-380 is glycosylated (N-linked (GlcNAc...) asparagine).

The protein belongs to the carbon-nitrogen hydrolase superfamily. BTD/VNN family.

It localises to the secreted. The protein resides in the extracellular space. It carries out the reaction biocytin + H2O = biotin + L-lysine. The enzyme catalyses biotin amide + H2O = biotin + NH4(+). Catalytic release of biotin from biocytin, the product of biotin-dependent carboxylases degradation. This is Biotinidase from Rattus norvegicus (Rat).